A 424-amino-acid polypeptide reads, in one-letter code: UDP-N-acetylglucosamine 1-carboxyvinyltransferase (424 aa).

22–23 is a phosphoenolpyruvate binding site; sequence KN. UDP-N-acetyl-alpha-D-glucosamine is bound at residue arginine 93. Cysteine 117 functions as the Proton donor in the catalytic mechanism. Cysteine 117 is subject to 2-(S-cysteinyl)pyruvic acid O-phosphothioketal. Residues 122–126, aspartate 307, and valine 329 contribute to the UDP-N-acetyl-alpha-D-glucosamine site; that span reads RPIDL.

It belongs to the EPSP synthase family. MurA subfamily.

It localises to the cytoplasm. The catalysed reaction is phosphoenolpyruvate + UDP-N-acetyl-alpha-D-glucosamine = UDP-N-acetyl-3-O-(1-carboxyvinyl)-alpha-D-glucosamine + phosphate. It functions in the pathway cell wall biogenesis; peptidoglycan biosynthesis. Cell wall formation. Adds enolpyruvyl to UDP-N-acetylglucosamine. This is UDP-N-acetylglucosamine 1-carboxyvinyltransferase from Chlorobium limicola (strain DSM 245 / NBRC 103803 / 6330).